The sequence spans 605 residues: Probable potassium transport system protein Kup 1 (605 aa).

12 helical membrane passes run 16–36, 46–66, 97–117, 138–158, 166–186, 212–232, 248–268, 287–307, 339–359, 368–388, 397–417, and 418–438; these read ALGL…TVIF, VFGI…MEYA, VAFA…DGVI, GLST…LFSV, VAGA…VTGV, GLAG…GEAL, WYFV…FAIT, LYIP…QSII, IYLG…MLLF, AYGM…IIVF, ALVA…TFSK, and IPHG…TIII.

This sequence belongs to the HAK/KUP transporter (TC 2.A.72) family.

It localises to the cell inner membrane. The catalysed reaction is K(+)(in) + H(+)(in) = K(+)(out) + H(+)(out). In terms of biological role, transport of potassium into the cell. Likely operates as a K(+):H(+) symporter. This is Probable potassium transport system protein Kup 1 from Geobacter metallireducens (strain ATCC 53774 / DSM 7210 / GS-15).